The sequence spans 242 residues: Probable 2-phosphosulfolactate phosphatase (242 aa).

The protein belongs to the ComB family. Mg(2+) is required as a cofactor.

It catalyses the reaction (2R)-O-phospho-3-sulfolactate + H2O = (2R)-3-sulfolactate + phosphate. The sequence is that of Probable 2-phosphosulfolactate phosphatase from Parasynechococcus marenigrum (strain WH8102).